The chain runs to 171 residues: Mitoferrin-1 (171 aa).

The disordered stretch occupies residues 1-40; sequence MELRRGGVGSQARARRMDGDSRDGGGGCKDAGSEDYENLP. One copy of the Solcar repeat lies at 43–131; it reads ASLSTHMTAG…FACYENMKRT (89 aa). Transmembrane regions (helical) follow at residues 45-64, 105-125, and 143-163; these read LSTH…SVMY, RGLN…FACY, and HLAN…PSTD.

This sequence belongs to the mitochondrial carrier (TC 2.A.29) family. Interacts with ACB10; this interaction stabilizes SLC25A37 and enhances the function of SLC25A37 to import mitochondrial iron during erythroid differentiation.

The protein resides in the mitochondrion inner membrane. The catalysed reaction is Fe(2+)(in) = Fe(2+)(out). Its function is as follows. Mitochondrial iron transporter that specifically mediates iron uptake in developing erythroid cells, thereby playing an essential role in heme biosynthesis. The sequence is that of Mitoferrin-1 (SLC25A37) from Bos taurus (Bovine).